Reading from the N-terminus, the 664-residue chain is DNA topoisomerase 4 subunit B (664 aa).

ATP-binding positions include Tyr-7, Asn-47, Asp-74, 114–120, and Lys-341; that span reads GLHGVGA. Residues 386–418 form a disordered region; that stretch reads REAARKAREDARSGKKNKRKDTLLSGKLTPAQS. The segment covering 387–398 has biased composition (basic and acidic residues); the sequence is EAARKAREDARS. A Toprim domain is found at 424–538; sequence NELYLVEGDS…AGRVFIALPP (115 aa). Mg(2+) is bound by residues Glu-430, Asp-503, and Asp-505.

Belongs to the type II topoisomerase family. ParE type 2 subfamily. In terms of assembly, heterotetramer composed of ParC and ParE. Mg(2+) serves as cofactor. The cofactor is Mn(2+). It depends on Ca(2+) as a cofactor.

The enzyme catalyses ATP-dependent breakage, passage and rejoining of double-stranded DNA.. Its function is as follows. Topoisomerase IV is essential for chromosome segregation. It relaxes supercoiled DNA. Performs the decatenation events required during the replication of a circular DNA molecule. The protein is DNA topoisomerase 4 subunit B of Staphylococcus epidermidis (strain ATCC 35984 / DSM 28319 / BCRC 17069 / CCUG 31568 / BM 3577 / RP62A).